Here is a 593-residue protein sequence, read N- to C-terminus: Glutamate decarboxylase 1 (593 aa).

Over residues 1–12 the composition is skewed to low complexity; sequence MASSTPSPATSS. The interval 1 to 22 is disordered; the sequence is MASSTPSPATSSNAGADPNTTN. S77 is modified (phosphoserine). Residue 189 to 191 coordinates 4-aminobutanoate; that stretch reads QLS. The residue at position 404 (K404) is an N6-(pyridoxal phosphate)lysine. R566 lines the 4-aminobutanoate pocket.

It belongs to the group II decarboxylase family. Homodimer. Pyridoxal 5'-phosphate is required as a cofactor.

It carries out the reaction L-glutamate + H(+) = 4-aminobutanoate + CO2. Catalyzes the synthesis of the inhibitory neurotransmitter gamma-aminobutyric acid (GABA) with pyridoxal 5'-phosphate as cofactor. This chain is Glutamate decarboxylase 1 (Gad1), found in Mus musculus (Mouse).